A 188-amino-acid polypeptide reads, in one-letter code: PRA1 family protein 3 (188 aa).

M1 is modified (N-acetylmethionine). Over 1–35 (MEVQVAPLRSWEDFFPGSDRFGRPDFKDISKWNNR) the chain is Cytoplasmic. Transmembrane regions (helical) follow at residues 36 to 56 (VVNN…AVVA) and 57 to 77 (IVGF…ILVF). The Cytoplasmic portion of the chain corresponds to 78–93 (LGFVWVSHNKDILRRM). The next 2 helical transmembrane spans lie at 94 to 114 (KKQY…FLIS) and 115 to 135 (YLGD…LMFI). At 136–188 (HASLRLRNIKNKLENKKEEIGLKKTPMGIILDALEQQEDNINKLASYIPKVKE) the chain is on the cytoplasmic side. Residues 136–188 (HASLRLRNIKNKLENKKEEIGLKKTPMGIILDALEQQEDNINKLASYIPKVKE) form a targeting to endoplasmic reticulum membrane region.

Belongs to the PRA1 family. Binds to prenylated RAB and Ras superfamily members.

The protein resides in the endoplasmic reticulum membrane. The protein localises to the cell membrane. It is found in the cytoplasm. Its subcellular location is the cytoskeleton. Regulates intracellular concentrations of taurine and glutamate. Negatively modulates SLC1A1/EAAC1 glutamate transport activity by decreasing its affinity for glutamate in a PKC activity-dependent manner. May be involved in membrane traffic. The protein is PRA1 family protein 3 (ARL6IP5) of Gallus gallus (Chicken).